Here is a 318-residue protein sequence, read N- to C-terminus: Taste receptor type 2 member 7 (318 aa).

At 1-9 (MADKVQTTL) the chain is on the extracellular side. Residues 10–30 (LFLAVGEFSVGILGNAFIGLV) form a helical membrane-spanning segment. Residues 31–55 (NCMDWVKKRKIASIDLILTSLAISR) are Cytoplasmic-facing. Residues 56-76 (ICLLCIILLDCFTLVLYPDVY) traverse the membrane as a helical segment. Topologically, residues 77–94 (ATGKEMRIIDFFWTLTNH) are extracellular. The helical transmembrane segment at 95–115 (LSIWFATCLSIYYFFKIGNFF) threads the bilayer. Over 116-128 (HPLFLWMKWRIDR) the chain is Cytoplasmic. Residues 129–149 (VISWILLGCVVLSVFISLPAT) traverse the membrane as a helical segment. Residues 150–187 (ENLNADFRFCVKAKRKTNLTWSCRVNKTQHASTKLFLN) are Extracellular-facing. 2 N-linked (GlcNAc...) asparagine glycosylation sites follow: N167 and N175. Residues 188-208 (LATLLPFCVCLMSFFLLILSL) traverse the membrane as a helical segment. Over 209-235 (RRHIRRMQLSATGCRDPSTEAHVRALK) the chain is Cytoplasmic. A helical membrane pass occupies residues 236–256 (AVISFLLLFIAYYLSFLIATS). Topologically, residues 257–266 (SYFMPETELA) are extracellular. Residues 267 to 287 (VIFGESIALIYPSSHSFILIL) traverse the membrane as a helical segment. Over 288-318 (GNNKLRYVSLKVIWKVMSILKGRKFQQHKQI) the chain is Cytoplasmic.

This sequence belongs to the G-protein coupled receptor T2R family.

It localises to the membrane. Gustducin-coupled receptor implicated in the perception of bitter compounds in the oral cavity and the gastrointestinal tract. Signals through PLCB2 and the calcium-regulated cation channel TRPM5. This is Taste receptor type 2 member 7 (TAS2R7) from Gorilla gorilla gorilla (Western lowland gorilla).